A 402-amino-acid chain; its full sequence is NADH-quinone oxidoreductase subunit D 2 (402 aa).

This sequence belongs to the complex I 49 kDa subunit family. In terms of assembly, NDH-1 is composed of 14 different subunits. Subunits NuoB, C, D, E, F, and G constitute the peripheral sector of the complex.

The protein localises to the cell inner membrane. It catalyses the reaction a quinone + NADH + 5 H(+)(in) = a quinol + NAD(+) + 4 H(+)(out). NDH-1 shuttles electrons from NADH, via FMN and iron-sulfur (Fe-S) centers, to quinones in the respiratory chain. The immediate electron acceptor for the enzyme in this species is believed to be ubiquinone. Couples the redox reaction to proton translocation (for every two electrons transferred, four hydrogen ions are translocated across the cytoplasmic membrane), and thus conserves the redox energy in a proton gradient. The polypeptide is NADH-quinone oxidoreductase subunit D 2 (Nitrobacter hamburgensis (strain DSM 10229 / NCIMB 13809 / X14)).